A 121-amino-acid chain; its full sequence is Oxalate-binding protein (121 aa).

The Cupin type-2 domain occupies 49 to 117; the sequence is RMKLPPGSSV…GNTDLEFLAV (69 aa). Residues His61, His63, and Glu68 each contribute to the Mn(2+) site. Tyr70 provides a ligand contact to oxalate. His102 contributes to the Mn(2+) binding site.

In terms of assembly, homodimer.

Its function is as follows. Binds oxalate. The protein is Oxalate-binding protein of Thermotoga maritima (strain ATCC 43589 / DSM 3109 / JCM 10099 / NBRC 100826 / MSB8).